Consider the following 557-residue polypeptide: Putative sensory transducer protein (557 aa).

The helical transmembrane segment at 122 to 145 (TASTVMIVVIFVGILIAIALGVFI) threads the bilayer. One can recognise an HAMP domain in the interval 147-199 (RIISKPIGQMVEAADRLALGDVEVDVKAETRDEIGKLAESFKRMIENIREQAY). The Methyl-accepting transducer domain maps to 243-472 (VAAQVAAGAK…ESAAASEELS (230 aa)). Gln-268 carries the post-translational modification Glutamate methyl ester (Gln). The residue at position 274 (Glu-274) is a Glutamate methyl ester (Glu). Gln-281 is modified (glutamate methyl ester (Gln)). At Glu-463 the chain carries Glutamate methyl ester (Glu). The span at 511–541 (DYTENKQPKSYSKEENGEYSDGKETAEKDVG) shows a compositional bias: basic and acidic residues. Positions 511-542 (DYTENKQPKSYSKEENGEYSDGKETAEKDVGG) are disordered.

Belongs to the methyl-accepting chemotaxis (MCP) protein family.

Its subcellular location is the cell membrane. Functionally, may bind attractants or detect changes in the extracellular concentration of soluble sugars. This Acetivibrio thermocellus (strain ATCC 27405 / DSM 1237 / JCM 9322 / NBRC 103400 / NCIMB 10682 / NRRL B-4536 / VPI 7372) (Clostridium thermocellum) protein is Putative sensory transducer protein.